The sequence spans 337 residues: Adenylosuccinate synthetase (337 aa).

Residues 12-18 (GDEGKGK) and 42-44 (GHT) each bind GTP. Residue aspartate 13 is the Proton acceptor of the active site. Mg(2+) contacts are provided by aspartate 13 and glycine 42. IMP-binding positions include 13–16 (DEGK), 40–43 (NAGH), threonine 127, arginine 141, glutamine 179, threonine 194, and arginine 256. The Proton donor role is filled by histidine 43. 252–258 (TVTGRRR) lines the substrate pocket. GTP-binding positions include arginine 258, 284-286 (CLD), and 324-326 (STG).

It belongs to the adenylosuccinate synthetase family. As to quaternary structure, homodimer. Mg(2+) is required as a cofactor.

The protein localises to the cytoplasm. The catalysed reaction is IMP + L-aspartate + GTP = N(6)-(1,2-dicarboxyethyl)-AMP + GDP + phosphate + 2 H(+). Its pathway is purine metabolism; AMP biosynthesis via de novo pathway; AMP from IMP: step 1/2. Plays an important role in the de novo pathway of purine nucleotide biosynthesis. Catalyzes the first committed step in the biosynthesis of AMP from IMP. The sequence is that of Adenylosuccinate synthetase from Methanococcus maripaludis (strain C6 / ATCC BAA-1332).